Consider the following 446-residue polypeptide: Coiled-coil domain-containing protein 112 (446 aa).

Coiled-coil stretches lie at residues lysine 35–aspartate 116 and glutamate 219–arginine 400. 2 disordered regions span residues phenylalanine 253–lysine 272 and leucine 390–isoleucine 430. Over residues asparagine 255–arginine 268 the composition is skewed to basic and acidic residues.

The protein localises to the cytoplasm. Its subcellular location is the cytoskeleton. It localises to the microtubule organizing center. It is found in the centrosome. The protein resides in the centriolar satellite. This Homo sapiens (Human) protein is Coiled-coil domain-containing protein 112 (CCDC112).